The sequence spans 307 residues: GTPase Era (307 aa).

Residues 13–180 form the Era-type G domain; sequence RCGFVALIGA…RRALAEMVPP (168 aa). Residues 21–28 are G1; the sequence is GAPNVGKS. 21 to 28 lines the GTP pocket; the sequence is GAPNVGKS. The interval 47–51 is G2; it reads QTTRA. The interval 68-71 is G3; it reads DTPG. GTP contacts are provided by residues 68-72 and 130-133; these read DTPGI and NKVD. Residues 130–133 form a G4 region; that stretch reads NKVD. The segment at 159 to 161 is G5; the sequence is ISA. One can recognise a KH type-2 domain in the interval 211–288; it reads LHQELPYQST…HLFLFVKVRE (78 aa).

This sequence belongs to the TRAFAC class TrmE-Era-EngA-EngB-Septin-like GTPase superfamily. Era GTPase family. In terms of assembly, monomer.

The protein localises to the cytoplasm. The protein resides in the cell inner membrane. An essential GTPase that binds both GDP and GTP, with rapid nucleotide exchange. Plays a role in 16S rRNA processing and 30S ribosomal subunit biogenesis and possibly also in cell cycle regulation and energy metabolism. The chain is GTPase Era from Bradyrhizobium sp. (strain ORS 278).